The following is a 65-amino-acid chain: Large ribosomal subunit protein bL35 (65 aa).

Residues 1–15 (MPKMKTKKSAAKRFQ) show a composition bias toward basic residues. Residues 1–26 (MPKMKTKKSAAKRFQVRGSGSIKRGQ) are disordered.

Belongs to the bacterial ribosomal protein bL35 family.

The protein is Large ribosomal subunit protein bL35 of Bordetella avium (strain 197N).